A 315-amino-acid polypeptide reads, in one-letter code: HTH-type transcriptional regulator TreR (315 aa).

The 55-residue stretch at 5-59 (LTIKDIARLSGVGKSTVSRVLNNESGVSERTRERVEAVMNQHGFSPSRSARAMRG) folds into the HTH lacI-type domain. The segment at residues 7–26 (IKDIARLSGVGKSTVSRVLN) is a DNA-binding region (H-T-H motif). Residues 71–77 (RLDSLSE), G126, R147, 187–190 (DITT), R194, T242, and Y284 contribute to the alpha,alpha-trehalose 6-phosphate site.

As to quaternary structure, homodimer.

In terms of biological role, repressor of the treBC operon. It is able to bind trehalose-6-phosphate. This chain is HTH-type transcriptional regulator TreR (treR), found in Salmonella typhimurium (strain LT2 / SGSC1412 / ATCC 700720).